The primary structure comprises 322 residues: Aspartate--ammonia ligase (322 aa).

This sequence belongs to the class-II aminoacyl-tRNA synthetase family. AsnA subfamily.

The protein resides in the cytoplasm. It carries out the reaction L-aspartate + NH4(+) + ATP = L-asparagine + AMP + diphosphate + H(+). The protein operates within amino-acid biosynthesis; L-asparagine biosynthesis; L-asparagine from L-aspartate (ammonia route): step 1/1. This Lactiplantibacillus plantarum (strain ATCC BAA-793 / NCIMB 8826 / WCFS1) (Lactobacillus plantarum) protein is Aspartate--ammonia ligase.